The following is a 129-amino-acid chain: Glycine cleavage system H protein (129 aa).

Positions 24 to 106 (IATIGISAFA…YGEGWLVKVR (83 aa)) constitute a Lipoyl-binding domain. Lys65 is modified (N6-lipoyllysine).

This sequence belongs to the GcvH family. As to quaternary structure, the glycine cleavage system is composed of four proteins: P, T, L and H. Requires (R)-lipoate as cofactor.

Its function is as follows. The glycine cleavage system catalyzes the degradation of glycine. The H protein shuttles the methylamine group of glycine from the P protein to the T protein. The protein is Glycine cleavage system H protein of Cyanothece sp. (strain PCC 7425 / ATCC 29141).